Consider the following 442-residue polypeptide: C4-dicarboxylate transport protein 4 (442 aa).

A run of 6 helical transmembrane segments spans residues 20-40, 53-73, 90-110, 160-180, 209-229, and 233-253; these read ILYV…YFYP, FIAL…VHGI, LIYF…VGEV, GDLL…AFLG, PVGA…GSLL, and ALIG…LGAI.

It belongs to the dicarboxylate/amino acid:cation symporter (DAACS) (TC 2.A.23) family.

The protein localises to the cell inner membrane. Functionally, responsible for the transport of dicarboxylates such as succinate, fumarate, and malate from the periplasm across the membrane. This is C4-dicarboxylate transport protein 4 from Bradyrhizobium diazoefficiens (strain JCM 10833 / BCRC 13528 / IAM 13628 / NBRC 14792 / USDA 110).